The sequence spans 408 residues: Aurora kinase A-B (408 aa).

Residues 1–10 (MERAVKENHK) show a composition bias toward basic and acidic residues. The segment at 1-128 (MERAVKENHK…QGKTLAVPKE (128 aa)) is disordered. Over residues 85-110 (GHQTSKPQGPNENRNPQQTSHSSTPN) the composition is skewed to polar residues. Positions 140 to 390 (FEIGRPLGKG…LKGVLEHPWI (251 aa)) constitute a Protein kinase domain. Residues Lys-150, Lys-169, and 217-220 (LDYA) each bind ATP. Catalysis depends on Asp-263, which acts as the Proton acceptor. Asp-281 serves as a coordination point for ATP. The segment at 287 to 300 (HAPSSRRTTLCGTL) is activation segment.

It belongs to the protein kinase superfamily. Ser/Thr protein kinase family. Aurora subfamily. Interacts with kif2c and kif11. In terms of processing, phosphorylated. Autophosphorylated on a serine residue.

The protein resides in the cytoplasm. The protein localises to the cytoskeleton. It localises to the spindle pole. It is found in the microtubule organizing center. Its subcellular location is the centrosome. It carries out the reaction L-seryl-[protein] + ATP = O-phospho-L-seryl-[protein] + ADP + H(+). The catalysed reaction is L-threonyl-[protein] + ATP = O-phospho-L-threonyl-[protein] + ADP + H(+). In terms of biological role, mitotic serine/threonine kinases that contributes to the regulation of cell cycle progression. Associates with the centrosome and the spindle microtubules during mitosis and plays a critical role in various mitotic events including the establishment of mitotic spindle, centrosome duplication, centrosome separation as well as maturation, chromosomal alignment, spindle assembly checkpoint, and cytokinesis. Phosphorylates numerous target proteins. Important for microtubule formation and/or stabilization. The polypeptide is Aurora kinase A-B (aurka-b) (Xenopus laevis (African clawed frog)).